Consider the following 105-residue polypeptide: Nucleoid-associated protein cu1912 (105 aa).

It belongs to the YbaB/EbfC family. Homodimer.

Its subcellular location is the cytoplasm. The protein resides in the nucleoid. Functionally, binds to DNA and alters its conformation. May be involved in regulation of gene expression, nucleoid organization and DNA protection. The sequence is that of Nucleoid-associated protein cu1912 from Corynebacterium urealyticum (strain ATCC 43042 / DSM 7109).